A 157-amino-acid polypeptide reads, in one-letter code: Eukaryotic translation initiation factor 5A-1 (157 aa).

Lysine 52 carries the hypusine modification. 2 positions are modified to phosphoserine: serine 75 and serine 77. Threonine 78 carries the post-translational modification Phosphothreonine.

This sequence belongs to the eIF-5A family. In terms of processing, lys-52 undergoes hypusination, a unique post-translational modification that consists in the addition of a butylamino group from spermidine to lysine side chain, leading to the formation of the unusual amino acid hypusine. eIF-5As are the only known proteins to undergo this modification, which is essential for their function.

It is found in the cytoplasm. Functionally, translation factor that promotes translation elongation and termination, particularly upon ribosome stalling at specific amino acid sequence contexts. Binds between the exit (E) and peptidyl (P) site of the ribosome and promotes rescue of stalled ribosome: specifically required for efficient translation of polyproline-containing peptides as well as other motifs that stall the ribosome. Acts as a ribosome quality control (RQC) cofactor by joining the RQC complex to facilitate peptidyl transfer during CAT tailing step. This Schizosaccharomyces pombe (strain 972 / ATCC 24843) (Fission yeast) protein is Eukaryotic translation initiation factor 5A-1 (tif51a).